The primary structure comprises 184 residues: Threonylcarbamoyl-AMP synthase (184 aa).

The YrdC-like domain maps to 1–184 (MNNLENIVEQ…IFTQHIFRQG (184 aa)).

It belongs to the SUA5 family. TsaC subfamily.

The protein resides in the cytoplasm. The catalysed reaction is L-threonine + hydrogencarbonate + ATP = L-threonylcarbamoyladenylate + diphosphate + H2O. Its function is as follows. Required for the formation of a threonylcarbamoyl group on adenosine at position 37 (t(6)A37) in tRNAs that read codons beginning with adenine. Catalyzes the conversion of L-threonine, HCO(3)(-)/CO(2) and ATP to give threonylcarbamoyl-AMP (TC-AMP) as the acyladenylate intermediate, with the release of diphosphate. The sequence is that of Threonylcarbamoyl-AMP synthase from Actinobacillus pleuropneumoniae serotype 5b (strain L20).